The sequence spans 543 residues: Zinc metalloproteinase (543 aa).

Positions 1–24 (MHPNYYLSPLAVAIALGIASPVKA) are cleaved as a signal peptide. Positions 25-207 (ADPIPLQKSS…PFVQWDDVKT (183 aa)) are excised as a propeptide. Histidine 377 lines the Zn(2+) pocket. Glutamate 378 is an active-site residue. Residues histidine 381 and glutamate 401 each contribute to the Zn(2+) site. The active-site Proton donor is the histidine 463.

Belongs to the peptidase M4 family. Zn(2+) serves as cofactor.

The protein resides in the secreted. Functionally, cleaves collagen, gelatin, casein, alpha-1-antitrypsin, and bovine insulin. May play a role in the pathogenesis of legionnaires disease. This Legionella pneumophila protein is Zinc metalloproteinase.